The sequence spans 1631 residues: MEFGRQLKTLLKKNLLLKGKSKCSICCEIVFPIVIIGVLFAILALIKVTNSDYNSIDVTTFSRRVGPENKLLYGSEGSLNNDQSGVIETMKEQVATARGLTVAEVQDFFMEINDRTLMESFFKNYSMMVYGGVWFNSSTNGGGGGNNNDPIAAGGQFGYNIRLDSDDTADTSETGKVDGGDSSIYLNDNFASIQVAMDQAIFGYFGLDMVLNISGRHYPDPYTELWQEWITGRDAIIKSAGSVFITAALMMFSFRLVTDVVIEKETKIVEAMRMMSLNSLAYFSSWIITSLITSLPVTLLIVVIFKGSQLIYSTSWGIVIITFVLYLITLLLLSFIFSIFFNNSKFCGLLSFVIVIAINICGIFVSKNEFSVSVKLLLSIFSPIAFSNSIYIMSVKDLTMILNLNWDYIVTENQSILMLGIDIIIYIILIWYFEKVIPGEYGTKEKFYFLFTKNYWFGKKRSIGEIDDIESTFDSEDVETIPLKVLKNSTISIRNLRKEFETGDGLRVAVNDLYLDMFEDQIHALLGPNGCGKSTTIGMLTGLISPTSGSAFIRGYDITSQMSKIRPYIGCCLQTDIIWSQLTVLEHLVIYASLKGVEGRNIQREAERMATEVGLAEKMNAPAGSLSGGQKRKLCLGIAFIGRSKIIFLDEVTSGMDPVSRRQVWDFLLKYKKGKTIILTTHYLEEADYLGDRIAIISQGKLRCDGTSLFLKNRFGQGYLLTCNKKLENASNGFNTNQVSEFIKNFIPGASILTDSGAELSYRLPTESLSNFPQFFTEFDLNLSKFSIQTYGISVTSLEEVFISLGQEDSKKLNNNANGNNEFNKQNEMESLKLAIATPSDGINQIQQFKGLLIKRIQQSKKDARSFFLSIILPMALIIGSIILYKSMNDQKQVLFYNNSTQPLTMSLSIYTDSDNTINVPMQLLNNELEWSNLFNNSPYFNKFKYINESINFNDYLIDNYKLSIGAINFTNQPISIDDNNNGQSTNCSYIAYYNSDYIHSFPIHVNLINDALLRKFKNISISVTSMPFDHILTAFEISSSDINASAIIYFVFILMAGFSLMAGSFAGSIAQERTNRVKRLLYVSGCKKHIYWLSNLVWDFFFAFIISILSCSILAGVIKGAFKEQFGSFLLCLILLSCAIIPLGYLMSYKFQTYGKAVGAITAILFVFGLVFTIASLNVRIQAVVNQNSTTQKVADIIDLIFSIISPIFALNRIVFILSGFPGSTRLGTFKVDNYWSFDYLGTPLIVLAGHAVLWNVWILLLDYVPQIKGFFKNPKNLPAPSPPQDEDYDVSQERRRLLNMRPSEEPIQFKNLHKLFPGSGKNPSKTAVYNSTLGIPRGQTFGLLGLNGGGKSTTLSMLSGEIVPSSGEISINGYDVITNREKALGNISMVFQFDALISLLSAREHLWLFSRIKGIKESQIENCVEAFIKMVDLTRIANSGCGGYSGGNKRKVSLSMAMLGNPSVCFLDEISCGCDAVVRRQLWDVISELGKDKSIILTSHSMSEVEALCSRITIMKEGKYTCLNTIQGVKNRFGAGYSIDVKFKKEYLETGIQTILQSIPNCTVLDQHDVMASFEVPNPPGNPIKLSNIFSILSNLPILDDYNVGQTSLESVFLKLTGANHDQRINLYD.

The next 7 helical transmembrane spans lie at 25–45 (ICCE…ILAL), 242–262 (SVFI…DVVI), 285–305 (SWII…VVIF), 317–337 (GIVI…SFIF), 346–366 (FCGL…IFVS), 372–392 (VSVK…SIYI), and 416–436 (ILML…FEKV). The ABC transporter 1 domain occupies 491–724 (ISIRNLRKEF…FGQGYLLTCN (234 aa)). 527 to 534 (GPNGCGKS) lines the ATP pocket. 7 helical membrane-spanning segments follow: residues 866-886 (SFFL…ILYK), 1047-1067 (AIIY…GSFA), 1099-1119 (WDFF…AGVI), 1127-1147 (FGSF…LGYL), 1158-1178 (AVGA…IASL), 1198-1218 (IIDL…IVFI), and 1242-1262 (LGTP…WILL). Residues 1309–1544 (IQFKNLHKLF…FGAGYSIDVK (236 aa)) enclose the ABC transporter 2 domain. 1347–1354 (GLNGGGKS) lines the ATP pocket.

Belongs to the ABC transporter superfamily. ABCA family.

It is found in the membrane. The sequence is that of ABC transporter A family member 6 (abcA6) from Dictyostelium discoideum (Social amoeba).